We begin with the raw amino-acid sequence, 330 residues long: BTB/POZ domain-containing adapter for CUL3-mediated RhoA degradation protein 1 (330 aa).

Residues Met1–Arg34 are disordered. One can recognise a BTB domain in the interval Lys40 to Asp108. Positions Gly282 to Gln291 are enriched in low complexity. Positions Gly282–Arg304 are disordered.

Belongs to the BACURD family.

The protein resides in the nucleus. Substrate-specific adapter of a BCR (BTB-CUL3-RBX1) E3 ubiquitin-protein ligase complex required for synaptic transmission. The BCR(KCTD13) E3 ubiquitin ligase complex mediates the ubiquitination of RHOA, leading to its degradation by the proteasome, thereby regulating the actin cytoskeleton and promoting synaptic transmission. The chain is BTB/POZ domain-containing adapter for CUL3-mediated RhoA degradation protein 1 from Danio rerio (Zebrafish).